We begin with the raw amino-acid sequence, 286 residues long: NADH-cytochrome b5 reductase 1 (286 aa).

Residues 6 to 26 (FILVIIGSVALAAGVKYVFTL) traverse the membrane as a helical segment. The FAD-binding FR-type domain occupies 52–155 (QEYRKFQLKE…KGPKGKFNYQ (104 aa)). Residues 135–150 (DNMF…GPKG) and 161–193 (SIGM…EISL) each bind FAD.

This sequence belongs to the flavoprotein pyridine nucleotide cytochrome reductase family. As to quaternary structure, monomer. The cofactor is FAD.

The protein resides in the endoplasmic reticulum membrane. Its subcellular location is the mitochondrion outer membrane. It carries out the reaction 2 Fe(III)-[cytochrome b5] + NADH = 2 Fe(II)-[cytochrome b5] + NAD(+) + H(+). In terms of biological role, electron donor reductase for cytochrome b5. The cytochrome b5/NADH cytochrome b5 reductase electron transfer system supports the catalytic activity of several sterol biosynthetic enzymes. This Dictyostelium discoideum (Social amoeba) protein is NADH-cytochrome b5 reductase 1 (cyb5r1).